A 338-amino-acid chain; its full sequence is Tetraacyldisaccharide 4'-kinase (338 aa).

Residue 63 to 70 participates in ATP binding; it reads TVGGSGKT.

The protein belongs to the LpxK family.

The enzyme catalyses a lipid A disaccharide + ATP = a lipid IVA + ADP + H(+). It participates in glycolipid biosynthesis; lipid IV(A) biosynthesis; lipid IV(A) from (3R)-3-hydroxytetradecanoyl-[acyl-carrier-protein] and UDP-N-acetyl-alpha-D-glucosamine: step 6/6. Transfers the gamma-phosphate of ATP to the 4'-position of a tetraacyldisaccharide 1-phosphate intermediate (termed DS-1-P) to form tetraacyldisaccharide 1,4'-bis-phosphate (lipid IVA). This Shewanella loihica (strain ATCC BAA-1088 / PV-4) protein is Tetraacyldisaccharide 4'-kinase.